The chain runs to 144 residues: Large ribosomal subunit protein uL15 (144 aa).

The tract at residues 1-53 (MRLNTLSPAEGAKHSAKRLGRGIGSGLGKTGGRGHKGQKSRTGGGVRRGFEGG) is disordered. The segment covering 21–31 (RGIGSGLGKTG) has biased composition (gly residues).

Belongs to the universal ribosomal protein uL15 family. In terms of assembly, part of the 50S ribosomal subunit.

Its function is as follows. Binds to the 23S rRNA. This is Large ribosomal subunit protein uL15 from Pasteurella multocida (strain Pm70).